The chain runs to 1182 residues: Myosin IC heavy chain (1182 aa).

The 684-residue stretch at 15–698 (EGLDDMTLLS…MLFSLEETRE (684 aa)) folds into the Myosin motor domain. ATP is bound at residue 109–116 (GESGAGKT). The segment at 571 to 593 (AAELVATLMKSTPHYIRTIKPND) is actin-binding. Residues 774-957 (RNRFSMISVR…QFHIASGLPA (184 aa)) form the TH1 domain. Disordered stretches follow at residues 999–1052 (KPAP…PAPG) and 1064–1103 (SKPLPSPTGAPMMKKPAPTAPGGPAPAGAPTPMMKKPAGQ). Over residues 1013-1042 (KKPAPTAPGGAPMMKKPAPAPGGAPMMKKP) the composition is skewed to low complexity. Residues 1081-1092 (PTAPGGPAPAGA) are compositionally biased toward pro residues. The SH3 domain maps to 1123-1182 (PPPQQYIALYEYDAMQPDELTFKENDVINLIKKVDADWWQGELVRTKQIGMLPSNYVQQI).

The protein belongs to the TRAFAC class myosin-kinesin ATPase superfamily. Myosin family. Myosin I heavy chain is single-headed. Dimer of a heavy and a light chain. Inability to self-assemble into filaments.

It is found in the cell projection. The protein localises to the lamellipodium. In terms of biological role, myosin is a protein that binds to actin and has ATPase activity that is activated by actin. Involved in the process of phagocytosis and appears to support streaming behavior. The chain is Myosin IC heavy chain (myoC) from Dictyostelium discoideum (Social amoeba).